Reading from the N-terminus, the 496-residue chain is Alanine aminotransferase 1 (496 aa).

An N-acetylalanine modification is found at Ala-2. Thr-22 carries the phosphothreonine modification. Lys-314 carries the N6-(pyridoxal phosphate)lysine modification.

The protein belongs to the class-I pyridoxal-phosphate-dependent aminotransferase family. Alanine aminotransferase subfamily. Homodimer. Pyridoxal 5'-phosphate serves as cofactor.

The protein localises to the cytoplasm. It catalyses the reaction L-alanine + 2-oxoglutarate = pyruvate + L-glutamate. It participates in amino-acid degradation; L-alanine degradation via transaminase pathway; pyruvate from L-alanine: step 1/1. In terms of biological role, catalyzes the reversible transamination between alanine and 2-oxoglutarate to form pyruvate and glutamate. Participates in cellular nitrogen metabolism and also in liver gluconeogenesis starting with precursors transported from skeletal muscles. The protein is Alanine aminotransferase 1 (GPT) of Bos taurus (Bovine).